We begin with the raw amino-acid sequence, 180 residues long: Peptidyl-tRNA hydrolase (180 aa).

Tyr-15 provides a ligand contact to tRNA. His-20 (proton acceptor) is an active-site residue. Residues Phe-67, Asn-69, and Asn-115 each coordinate tRNA.

Belongs to the PTH family. As to quaternary structure, monomer.

Its subcellular location is the cytoplasm. It carries out the reaction an N-acyl-L-alpha-aminoacyl-tRNA + H2O = an N-acyl-L-amino acid + a tRNA + H(+). Functionally, hydrolyzes ribosome-free peptidyl-tRNAs (with 1 or more amino acids incorporated), which drop off the ribosome during protein synthesis, or as a result of ribosome stalling. In terms of biological role, catalyzes the release of premature peptidyl moieties from peptidyl-tRNA molecules trapped in stalled 50S ribosomal subunits, and thus maintains levels of free tRNAs and 50S ribosomes. The protein is Peptidyl-tRNA hydrolase of Chlamydia pneumoniae (Chlamydophila pneumoniae).